The sequence spans 223 residues: MHAGSGNDMDITRMTPTRLDDEPDAPEPETREDDNKTLNSPISELEGRLFDQRKVLIFGGINDKIARDVTGRLLALAGTSDKPIDVYVNSPGGHVESGDTIHDMIRFVDSIAPINMIGTGWVASAGALIYAAGRPERRVCLPNTRFLLHQPMGGVRGPATDIDIEAREIIKMRERLNRIFAKETGQTYEKVAKDTDRNYWMSANEAIAYGLVNRIIHSATELK.

Positions 1-40 (MHAGSGNDMDITRMTPTRLDDEPDAPEPETREDDNKTLNS) are disordered. A compositionally biased stretch (acidic residues) spans 21-32 (DEPDAPEPETRE). Catalysis depends on S124, which acts as the Nucleophile. Residue H149 is part of the active site.

It belongs to the peptidase S14 family. As to quaternary structure, fourteen ClpP subunits assemble into 2 heptameric rings which stack back to back to give a disk-like structure with a central cavity, resembling the structure of eukaryotic proteasomes.

The protein resides in the cytoplasm. The enzyme catalyses Hydrolysis of proteins to small peptides in the presence of ATP and magnesium. alpha-casein is the usual test substrate. In the absence of ATP, only oligopeptides shorter than five residues are hydrolyzed (such as succinyl-Leu-Tyr-|-NHMec, and Leu-Tyr-Leu-|-Tyr-Trp, in which cleavage of the -Tyr-|-Leu- and -Tyr-|-Trp bonds also occurs).. Functionally, cleaves peptides in various proteins in a process that requires ATP hydrolysis. Has a chymotrypsin-like activity. Plays a major role in the degradation of misfolded proteins. The polypeptide is ATP-dependent Clp protease proteolytic subunit 2 (Gluconobacter oxydans (strain 621H) (Gluconobacter suboxydans)).